A 146-amino-acid chain; its full sequence is Holo-[acyl-carrier-protein] synthase (146 aa).

Mg(2+)-binding residues include D9 and E63.

The protein belongs to the P-Pant transferase superfamily. AcpS family. The cofactor is Mg(2+).

It localises to the cytoplasm. It carries out the reaction apo-[ACP] + CoA = holo-[ACP] + adenosine 3',5'-bisphosphate + H(+). Functionally, transfers the 4'-phosphopantetheine moiety from coenzyme A to a Ser of acyl-carrier-protein. This is Holo-[acyl-carrier-protein] synthase from Burkholderia multivorans (strain ATCC 17616 / 249).